Reading from the N-terminus, the 341-residue chain is Anthranilate phosphoribosyltransferase (341 aa).

Residues G79, 82–83, T87, 89–92, 107–115, and S119 each bind 5-phospho-alpha-D-ribose 1-diphosphate; these read GD, NIST, and KHGNRAVSS. An anthranilate-binding site is contributed by G79. S91 provides a ligand contact to Mg(2+). Anthranilate is bound at residue N110. R165 is an anthranilate binding site. The Mg(2+) site is built by D224 and E225.

The protein belongs to the anthranilate phosphoribosyltransferase family. In terms of assembly, homodimer. Mg(2+) is required as a cofactor.

The catalysed reaction is N-(5-phospho-beta-D-ribosyl)anthranilate + diphosphate = 5-phospho-alpha-D-ribose 1-diphosphate + anthranilate. It functions in the pathway amino-acid biosynthesis; L-tryptophan biosynthesis; L-tryptophan from chorismate: step 2/5. Catalyzes the transfer of the phosphoribosyl group of 5-phosphorylribose-1-pyrophosphate (PRPP) to anthranilate to yield N-(5'-phosphoribosyl)-anthranilate (PRA). The protein is Anthranilate phosphoribosyltransferase of Bacillus cereus (strain AH820).